A 162-amino-acid polypeptide reads, in one-letter code: Single-stranded DNA-binding protein 1 (162 aa).

Residues 5-110 (LNKVMLIGHL…IVCTDMQMLG (106 aa)) enclose the SSB domain. Residues 110–162 (GAKDSGGGTSDASYSQNRPSYSRPSRPEPSSGNYGASPSSGGAQEFEKDDLPF) are disordered. The segment covering 122-140 (SYSQNRPSYSRPSRPEPSS) has biased composition (low complexity). Polar residues predominate over residues 141–151 (GNYGASPSSGG).

Homotetramer.

This is Single-stranded DNA-binding protein 1 (ssb1) from Chlorobaculum tepidum (strain ATCC 49652 / DSM 12025 / NBRC 103806 / TLS) (Chlorobium tepidum).